Here is a 309-residue protein sequence, read N- to C-terminus: PI-PLC X domain-containing protein 1 (309 aa).

Residues 17–193 (HMWDIPLWNL…QVILSYDDES (177 aa)) enclose the PI-PLC X-box domain.

The chain is PI-PLC X domain-containing protein 1 (plcxd1) from Danio rerio (Zebrafish).